We begin with the raw amino-acid sequence, 480 residues long: Cysteine--tRNA ligase (480 aa).

Residue cysteine 27 participates in Zn(2+) binding. The short motif at 29-39 is the 'HIGH' region element; sequence PTVYNYAHIGN. Zn(2+) is bound by residues cysteine 221, histidine 246, and glutamate 250. The short motif at 278-282 is the 'KMSKS' region element; sequence KMSKS. Lysine 281 lines the ATP pocket.

The protein belongs to the class-I aminoacyl-tRNA synthetase family. In terms of assembly, monomer. It depends on Zn(2+) as a cofactor.

It is found in the cytoplasm. It carries out the reaction tRNA(Cys) + L-cysteine + ATP = L-cysteinyl-tRNA(Cys) + AMP + diphosphate. This is Cysteine--tRNA ligase from Borrelia garinii subsp. bavariensis (strain ATCC BAA-2496 / DSM 23469 / PBi) (Borreliella bavariensis).